Here is a 122-residue protein sequence, read N- to C-terminus: Large ribosomal subunit protein uL14 (122 aa).

It belongs to the universal ribosomal protein uL14 family. As to quaternary structure, part of the 50S ribosomal subunit. Forms a cluster with proteins L3 and L19. In the 70S ribosome, L14 and L19 interact and together make contacts with the 16S rRNA in bridges B5 and B8.

In terms of biological role, binds to 23S rRNA. Forms part of two intersubunit bridges in the 70S ribosome. The chain is Large ribosomal subunit protein uL14 from Corynebacterium aurimucosum (strain ATCC 700975 / DSM 44827 / CIP 107346 / CN-1) (Corynebacterium nigricans).